Reading from the N-terminus, the 432-residue chain is MTTEIMQISLSHNPADARWGEKALISTNDQGVTIHLTSHDQLGGIQRAARKIDGQGIKQVKLAGEGWGLEQSWAFWQGFRGPKGQRSVVWAELPANEKTELEQRLQIIDWVRDTINAPAEDLGPEQLAKNAIDLLCAVSCDAVSYRITKGEDLREQNYAGIYTVGRGSDRAPVLLALDYNPTGNPDAPVMACLVGKGITFDSGGYSLKQSAFMDSMKSDMGGAATLTGALALAAARGLKERVKLYLCCADNMVSGNAFKLGDIIRYRNGKTVEIMNTDAEGRLVLADGLIDASEQNAPLIIDAATLTGAAKTALGNDYHALFSFDDELAQALLNSAHSEHELFWRLPLAEFHRSQLPSNFAELNNVAGGAYSAGASTAAAFLSHFVKNYQQGWLHIDCSATYRKSAVDQWSAGATGLGVRTVANLLLAQAKQ.

Residues lysine 196 and aspartate 201 each coordinate Mn(2+). Residue lysine 208 is part of the active site. Positions 219, 278, and 280 each coordinate Mn(2+). Arginine 282 is a catalytic residue.

It belongs to the peptidase M17 family. In terms of assembly, homohexamer. The cofactor is Mn(2+).

It localises to the cytoplasm. The enzyme catalyses Release of an N-terminal amino acid, Xaa, from a peptide or arylamide. Xaa is preferably Glu or Asp but may be other amino acids, including Leu, Met, His, Cys and Gln.. In terms of biological role, probably plays an important role in intracellular peptide degradation. The protein is Peptidase B of Yersinia pseudotuberculosis serotype IB (strain PB1/+).